Consider the following 686-residue polypeptide: DNA gyrase subunit B (686 aa).

Residues 1–27 (MADSGNPNENNPSTDTGVNDAVSTSHG) show a composition bias toward polar residues. Positions 1-29 (MADSGNPNENNPSTDTGVNDAVSTSHGDA) are disordered. Positions 465-579 (CEIFIVEGDS…SGHVYLSRPP (115 aa)) constitute a Toprim domain. The Mg(2+) site is built by Glu-471, Asp-544, and Asp-546.

It belongs to the type II topoisomerase GyrB family. In terms of assembly, heterotetramer, composed of two GyrA and two GyrB chains. In the heterotetramer, GyrA contains the active site tyrosine that forms a transient covalent intermediate with DNA, while GyrB binds cofactors and catalyzes ATP hydrolysis. Mg(2+) serves as cofactor. Mn(2+) is required as a cofactor. The cofactor is Ca(2+).

The protein resides in the cytoplasm. It carries out the reaction ATP-dependent breakage, passage and rejoining of double-stranded DNA.. A type II topoisomerase that negatively supercoils closed circular double-stranded (ds) DNA in an ATP-dependent manner to modulate DNA topology and maintain chromosomes in an underwound state. Negative supercoiling favors strand separation, and DNA replication, transcription, recombination and repair, all of which involve strand separation. Also able to catalyze the interconversion of other topological isomers of dsDNA rings, including catenanes and knotted rings. Type II topoisomerases break and join 2 DNA strands simultaneously in an ATP-dependent manner. The chain is DNA gyrase subunit B from Streptomyces coelicolor (strain ATCC BAA-471 / A3(2) / M145).